The sequence spans 172 residues: MLPMITGFMNYGQQTLRAARYIGQGFMITLSHTNRLPVTIQYPYEKLITSERFRGRIHFEFDKCIACEVCVRVCPIDLPVVDWKLETNIRKKRLLNYSIDFGICIFCGNCVEYCPTNCLSMTEEYEFSTYDRHELNYNQIALGRLPMSVIDDYTIRTILNSPQTKNEVNPLI.

2 consecutive 4Fe-4S ferredoxin-type domains span residues 55–84 (GRIH…VDWK) and 95–124 (LNYS…MTEE). [4Fe-4S] cluster is bound by residues Cys64, Cys67, Cys70, Cys74, Cys104, Cys107, Cys110, and Cys114.

This sequence belongs to the complex I 23 kDa subunit family. In terms of assembly, NDH is composed of at least 16 different subunits, 5 of which are encoded in the nucleus. [4Fe-4S] cluster is required as a cofactor.

Its subcellular location is the plastid. The protein localises to the chloroplast thylakoid membrane. It carries out the reaction a plastoquinone + NADH + (n+1) H(+)(in) = a plastoquinol + NAD(+) + n H(+)(out). The enzyme catalyses a plastoquinone + NADPH + (n+1) H(+)(in) = a plastoquinol + NADP(+) + n H(+)(out). Its function is as follows. NDH shuttles electrons from NAD(P)H:plastoquinone, via FMN and iron-sulfur (Fe-S) centers, to quinones in the photosynthetic chain and possibly in a chloroplast respiratory chain. The immediate electron acceptor for the enzyme in this species is believed to be plastoquinone. Couples the redox reaction to proton translocation, and thus conserves the redox energy in a proton gradient. This Olimarabidopsis pumila (Dwarf rocket) protein is NAD(P)H-quinone oxidoreductase subunit I, chloroplastic.